A 264-amino-acid polypeptide reads, in one-letter code: MKAVVLAVALVFLTGSQAWHVWQQDEPQSRWDKVKDFATVYVDAVKDSGRDYVSQFESSSLGKQLNLNLLENWDTLGTTVGQLQERLGPLTRDFWDNLEKETDWLRQEMNKDLEEVKQNVQPYLDEFQKKWNEDVELYRQRVAPLGAELHESARQKLQELQGKLSPVAEEFRDRMRTHVDALRTQLAPHSDKLRESLAQRLAELKSNPTLNEYHTRAKTHLNTFGEKARPALEDLRHTLIPILDTLKTKVKSVIDKARETLTAQ.

The first 18 residues, M1–A18, serve as a signal peptide directing secretion. A run of 2 repeats spans residues L67–G88 and P89–N110. Residues L67 to Q264 are 10 X approximate tandem repeats. M109 is modified (methionine sulfoxide). The stretch at K111 to Q121 is one 3; half-length repeat. Tandem repeats lie at residues P122 to A143, P144 to S165, and P166 to A187. One copy of the 7; truncated repeat lies at P188–N207. Copy 8 of the repeat occupies P208 to R229. A 9; half-length repeat occupies P230–I240. The stretch at P241–Q264 is repeat 10.

It belongs to the apolipoprotein A1/A4/E family. As to quaternary structure, homodimer. Interacts with APOA1BP and CLU. Component of a sperm activating protein complex (SPAP), consisting of APOA1, an immunoglobulin heavy chain, an immunoglobulin light chain and albumin. Interacts with NDRG1. Interacts with SCGB3A2. Interacts with NAXE and YJEFN3. In terms of processing, glycosylated. Palmitoylated. Post-translationally, phosphorylation sites are present in the extracellular medium.

The protein resides in the secreted. Its function is as follows. Participates in the reverse transport of cholesterol from tissues to the liver for excretion by promoting cholesterol efflux from tissues and by acting as a cofactor for the lecithin cholesterol acyltransferase (LCAT). As part of the SPAP complex, activates spermatozoa motility. In Mus pahari (Gairdner's shrew-mouse), this protein is Apolipoprotein A-I (Apoa1).